The chain runs to 130 residues: Phosphoribosyl-AMP cyclohydrolase (130 aa).

Position 78 (aspartate 78) interacts with Mg(2+). Residue cysteine 79 participates in Zn(2+) binding. Mg(2+)-binding residues include aspartate 80 and aspartate 82. Zn(2+)-binding residues include cysteine 96 and cysteine 103.

Belongs to the PRA-CH family. Homodimer. Mg(2+) is required as a cofactor. Requires Zn(2+) as cofactor.

The protein resides in the cytoplasm. The enzyme catalyses 1-(5-phospho-beta-D-ribosyl)-5'-AMP + H2O = 1-(5-phospho-beta-D-ribosyl)-5-[(5-phospho-beta-D-ribosylamino)methylideneamino]imidazole-4-carboxamide. It participates in amino-acid biosynthesis; L-histidine biosynthesis; L-histidine from 5-phospho-alpha-D-ribose 1-diphosphate: step 3/9. Functionally, catalyzes the hydrolysis of the adenine ring of phosphoribosyl-AMP. In Methylobacillus flagellatus (strain ATCC 51484 / DSM 6875 / VKM B-1610 / KT), this protein is Phosphoribosyl-AMP cyclohydrolase.